Here is a 202-residue protein sequence, read N- to C-terminus: NADH-quinone oxidoreductase subunit J (202 aa).

5 consecutive transmembrane segments (helical) span residues 3-23, 31-51, 53-73, 93-113, and 146-166; these read VFVF…LMVV, AVLW…LMGA, FVAM…FLFV, PVGG…LMVW, and LYLF…AILL.

This sequence belongs to the complex I subunit 6 family. NDH-1 is composed of 14 different subunits. Subunits NuoA, H, J, K, L, M, N constitute the membrane sector of the complex.

The protein localises to the cellular chromatophore membrane. It catalyses the reaction a quinone + NADH + 5 H(+)(in) = a quinol + NAD(+) + 4 H(+)(out). In terms of biological role, NDH-1 shuttles electrons from NADH, via FMN and iron-sulfur (Fe-S) centers, to quinones in the respiratory chain. The immediate electron acceptor for the enzyme in this species is believed to be ubiquinone. Couples the redox reaction to proton translocation (for every two electrons transferred, four hydrogen ions are translocated across the cytoplasmic membrane), and thus conserves the redox energy in a proton gradient. This is NADH-quinone oxidoreductase subunit J (nuoJ) from Rhodobacter capsulatus (Rhodopseudomonas capsulata).